The following is a 321-amino-acid chain: Cytochrome c biogenesis protein CcsA (321 aa).

Helical transmembrane passes span 9-29 (ILTH…LITL), 44-64 (GMIA…VSSG), 68-88 (LSNL…LHTI), 143-163 (MLLS…LLII), 225-245 (VISL…VWAN), 259-273 (TWAF…IYLH), and 288-308 (VASI…LLGI).

It belongs to the CcmF/CycK/Ccl1/NrfE/CcsA family. In terms of assembly, may interact with Ccs1.

The protein resides in the plastid. It is found in the chloroplast thylakoid membrane. Required during biogenesis of c-type cytochromes (cytochrome c6 and cytochrome f) at the step of heme attachment. This is Cytochrome c biogenesis protein CcsA from Zea mays (Maize).